Reading from the N-terminus, the 447-residue chain is Serine/threonine-protein phosphatase 2A 55 kDa regulatory subunit B gamma isoform (447 aa).

WD repeat units lie at residues 22-61, 87-128, 171-209, 220-260, 279-317, 334-375, and 410-446; these read TEAD…KNAP, EIEE…KRPE, GHTY…RSFN, DLTE…LCDK, EIIS…RPIE, ENDC…DVTL, and DFTK…NSDM.

The protein belongs to the phosphatase 2A regulatory subunit B family. In terms of assembly, PP2A consists of a common heterodimeric core enzyme, composed of a 36 kDa catalytic subunit (subunit C) and a 65 kDa constant regulatory subunit (PR65 or subunit A), that associates with a variety of regulatory subunits. Proteins that associate with the core dimer include three families of regulatory subunits B (the R2/B/PR55/B55, R3/B''/PR72/PR130/PR59 and R5/B'/B56 families), the 48 kDa variable regulatory subunit, viral proteins, and cell signaling molecules. Interacts with IER5.

Its function is as follows. The B regulatory subunit might modulate substrate selectivity and catalytic activity, and might also direct the localization of the catalytic enzyme to a particular subcellular compartment. This chain is Serine/threonine-protein phosphatase 2A 55 kDa regulatory subunit B gamma isoform (PPP2R2C), found in Homo sapiens (Human).